The following is a 389-amino-acid chain: Succinate--CoA ligase [ADP-forming] subunit beta (389 aa).

Residues 9–244 (KEIFRSMGVA…LDEEDPKEIE (236 aa)) form the ATP-grasp domain. ATP contacts are provided by residues lysine 46, 53–55 (GRG), glutamate 99, cysteine 102, and glutamate 107. Residues asparagine 199 and aspartate 213 each contribute to the Mg(2+) site. Substrate contacts are provided by residues asparagine 264 and 321–323 (GIM).

Belongs to the succinate/malate CoA ligase beta subunit family. As to quaternary structure, heterotetramer of two alpha and two beta subunits. Requires Mg(2+) as cofactor.

The catalysed reaction is succinate + ATP + CoA = succinyl-CoA + ADP + phosphate. The enzyme catalyses GTP + succinate + CoA = succinyl-CoA + GDP + phosphate. It functions in the pathway carbohydrate metabolism; tricarboxylic acid cycle; succinate from succinyl-CoA (ligase route): step 1/1. In terms of biological role, succinyl-CoA synthetase functions in the citric acid cycle (TCA), coupling the hydrolysis of succinyl-CoA to the synthesis of either ATP or GTP and thus represents the only step of substrate-level phosphorylation in the TCA. The beta subunit provides nucleotide specificity of the enzyme and binds the substrate succinate, while the binding sites for coenzyme A and phosphate are found in the alpha subunit. In Macrococcus caseolyticus (strain JCSC5402) (Macrococcoides caseolyticum), this protein is Succinate--CoA ligase [ADP-forming] subunit beta.